We begin with the raw amino-acid sequence, 250 residues long: Glutamate racemase (250 aa).

Substrate-binding positions include 7–8 and 39–40; these read DS and YG. The Proton donor/acceptor role is filled by C70. 71-72 contacts substrate; that stretch reads NT. The active-site Proton donor/acceptor is the C180. Position 181 to 182 (181 to 182) interacts with substrate; the sequence is TH.

Belongs to the aspartate/glutamate racemases family.

It catalyses the reaction L-glutamate = D-glutamate. The protein operates within cell wall biogenesis; peptidoglycan biosynthesis. Provides the (R)-glutamate required for cell wall biosynthesis. This is Glutamate racemase from Campylobacter jejuni subsp. jejuni serotype O:2 (strain ATCC 700819 / NCTC 11168).